Reading from the N-terminus, the 74-residue chain is Small ribosomal subunit protein bS18 (74 aa).

Belongs to the bacterial ribosomal protein bS18 family. As to quaternary structure, part of the 30S ribosomal subunit. Forms a tight heterodimer with protein bS6.

Binds as a heterodimer with protein bS6 to the central domain of the 16S rRNA, where it helps stabilize the platform of the 30S subunit. This is Small ribosomal subunit protein bS18 from Novosphingobium aromaticivorans (strain ATCC 700278 / DSM 12444 / CCUG 56034 / CIP 105152 / NBRC 16084 / F199).